A 173-amino-acid chain; its full sequence is Crossover junction endodeoxyribonuclease RuvC (173 aa).

Catalysis depends on residues Asp8, Glu69, and Asp141. Mg(2+) is bound by residues Asp8, Glu69, and Asp141.

The protein belongs to the RuvC family. As to quaternary structure, homodimer which binds Holliday junction (HJ) DNA. The HJ becomes 2-fold symmetrical on binding to RuvC with unstacked arms; it has a different conformation from HJ DNA in complex with RuvA. In the full resolvosome a probable DNA-RuvA(4)-RuvB(12)-RuvC(2) complex forms which resolves the HJ. It depends on Mg(2+) as a cofactor.

Its subcellular location is the cytoplasm. The enzyme catalyses Endonucleolytic cleavage at a junction such as a reciprocal single-stranded crossover between two homologous DNA duplexes (Holliday junction).. The RuvA-RuvB-RuvC complex processes Holliday junction (HJ) DNA during genetic recombination and DNA repair. Endonuclease that resolves HJ intermediates. Cleaves cruciform DNA by making single-stranded nicks across the HJ at symmetrical positions within the homologous arms, yielding a 5'-phosphate and a 3'-hydroxyl group; requires a central core of homology in the junction. The consensus cleavage sequence is 5'-(A/T)TT(C/G)-3'. Cleavage occurs on the 3'-side of the TT dinucleotide at the point of strand exchange. HJ branch migration catalyzed by RuvA-RuvB allows RuvC to scan DNA until it finds its consensus sequence, where it cleaves and resolves the cruciform DNA. The chain is Crossover junction endodeoxyribonuclease RuvC from Stenotrophomonas maltophilia (strain K279a).